Here is a 128-residue protein sequence, read N- to C-terminus: Large-conductance mechanosensitive channel (128 aa).

2 helical membrane passes run 10-30 (FAMRGNVVDMAVGVIIGGAFG) and 76-96 (GLFIQNVFDFIIIAFAIFMMV).

The protein belongs to the MscL family. As to quaternary structure, homopentamer.

It is found in the cell inner membrane. Functionally, channel that opens in response to stretch forces in the membrane lipid bilayer. May participate in the regulation of osmotic pressure changes within the cell. This is Large-conductance mechanosensitive channel from Mannheimia succiniciproducens (strain KCTC 0769BP / MBEL55E).